The chain runs to 168 residues: 3-isopropylmalate dehydratase small subunit 2 (168 aa).

Belongs to the LeuD family. LeuD type 2 subfamily. Heterodimer of LeuC and LeuD.

The catalysed reaction is (2R,3S)-3-isopropylmalate = (2S)-2-isopropylmalate. The protein operates within amino-acid biosynthesis; L-leucine biosynthesis; L-leucine from 3-methyl-2-oxobutanoate: step 2/4. Catalyzes the isomerization between 2-isopropylmalate and 3-isopropylmalate, via the formation of 2-isopropylmaleate. The sequence is that of 3-isopropylmalate dehydratase small subunit 2 (leuD2) from Methanopyrus kandleri (strain AV19 / DSM 6324 / JCM 9639 / NBRC 100938).